The following is a 302-amino-acid chain: MPSKEIDINQKKNVLPKPEDIQLIICDVDGTLLGPDHKPHPRNLRALKYLRENYPQLPFVLATGRQRTSVGNIREALGLHVFPCVHLNGCVVYDKGEIVACAALKNSLAIDIIDKLKDIQTCALFGYDEDYVYQIKQESDKKQHGIKFLRLCGETVKDDANEMLPQLKGPKDIFNKMVVFDDDTNGLEEAKKRLAGIPSDEVALTQALPQTFEIIPPNDNKGVALKNILSKIYPSISLENVLAFGDGANDVCMFELAGYSVAIRSGMPVALKAAKAISDVSSAEGAVGEVLERIYNIPPDFN.

It belongs to the HAD-like hydrolase superfamily.

It is found in the cytoplasm. Its subcellular location is the nucleus. This is an uncharacterized protein from Schizosaccharomyces pombe (strain 972 / ATCC 24843) (Fission yeast).